The following is a 422-amino-acid chain: UDP-N-acetylglucosamine 1-carboxyvinyltransferase (422 aa).

Residue 22 to 23 (KN) coordinates phosphoenolpyruvate. UDP-N-acetyl-alpha-D-glucosamine is bound at residue Arg-95. The Proton donor role is filled by Cys-119. 2-(S-cysteinyl)pyruvic acid O-phosphothioketal is present on Cys-119. UDP-N-acetyl-alpha-D-glucosamine is bound by residues 124-128 (RPIDQ), Asp-309, and Val-331.

It belongs to the EPSP synthase family. MurA subfamily.

It localises to the cytoplasm. The catalysed reaction is phosphoenolpyruvate + UDP-N-acetyl-alpha-D-glucosamine = UDP-N-acetyl-3-O-(1-carboxyvinyl)-alpha-D-glucosamine + phosphate. Its pathway is cell wall biogenesis; peptidoglycan biosynthesis. Its function is as follows. Cell wall formation. Adds enolpyruvyl to UDP-N-acetylglucosamine. The chain is UDP-N-acetylglucosamine 1-carboxyvinyltransferase from Anaeromyxobacter dehalogenans (strain 2CP-C).